A 428-amino-acid polypeptide reads, in one-letter code: 3-phosphoshikimate 1-carboxyvinyltransferase (428 aa).

3-phosphoshikimate-binding residues include Lys-23, Ser-24, and Arg-28. Residue Lys-23 coordinates phosphoenolpyruvate. Residues Gly-97 and Arg-125 each contribute to the phosphoenolpyruvate site. Residues Ser-170, Ser-171, Gln-172, Ser-198, Asp-314, Asn-337, and Lys-341 each coordinate 3-phosphoshikimate. Gln-172 is a binding site for phosphoenolpyruvate. The active-site Proton acceptor is Asp-314. 3 residues coordinate phosphoenolpyruvate: Arg-345, Arg-387, and Lys-412.

The protein belongs to the EPSP synthase family. Monomer.

The protein localises to the cytoplasm. The enzyme catalyses 3-phosphoshikimate + phosphoenolpyruvate = 5-O-(1-carboxyvinyl)-3-phosphoshikimate + phosphate. Its pathway is metabolic intermediate biosynthesis; chorismate biosynthesis; chorismate from D-erythrose 4-phosphate and phosphoenolpyruvate: step 6/7. Catalyzes the transfer of the enolpyruvyl moiety of phosphoenolpyruvate (PEP) to the 5-hydroxyl of shikimate-3-phosphate (S3P) to produce enolpyruvyl shikimate-3-phosphate and inorganic phosphate. The protein is 3-phosphoshikimate 1-carboxyvinyltransferase of Cronobacter sakazakii (strain ATCC BAA-894) (Enterobacter sakazakii).